Consider the following 251-residue polypeptide: Small ribosomal subunit protein uS2 (251 aa).

This sequence belongs to the universal ribosomal protein uS2 family.

The chain is Small ribosomal subunit protein uS2 from Novosphingobium aromaticivorans (strain ATCC 700278 / DSM 12444 / CCUG 56034 / CIP 105152 / NBRC 16084 / F199).